The chain runs to 332 residues: GTP 3',8-cyclase (332 aa).

The 215-residue stretch at 7-221 folds into the Radical SAM core domain; that stretch reads SYDRLHDYVR…FDTCKDNGLA (215 aa). Residue arginine 16 coordinates GTP. [4Fe-4S] cluster contacts are provided by cysteine 23 and cysteine 27. Tyrosine 29 is an S-adenosyl-L-methionine binding site. Cysteine 30 is a binding site for [4Fe-4S] cluster. Residue arginine 66 participates in GTP binding. Residue glycine 70 participates in S-adenosyl-L-methionine binding. A GTP-binding site is contributed by threonine 97. Serine 121 contributes to the S-adenosyl-L-methionine binding site. Lysine 158 provides a ligand contact to GTP. An S-adenosyl-L-methionine-binding site is contributed by methionine 192. [4Fe-4S] cluster-binding residues include cysteine 256 and cysteine 259. Residue 261-263 participates in GTP binding; that stretch reads RLR. Cysteine 273 is a [4Fe-4S] cluster binding site.

This sequence belongs to the radical SAM superfamily. MoaA family. As to quaternary structure, monomer and homodimer. The cofactor is [4Fe-4S] cluster.

It catalyses the reaction GTP + AH2 + S-adenosyl-L-methionine = (8S)-3',8-cyclo-7,8-dihydroguanosine 5'-triphosphate + 5'-deoxyadenosine + L-methionine + A + H(+). Its pathway is cofactor biosynthesis; molybdopterin biosynthesis. Its function is as follows. Catalyzes the cyclization of GTP to (8S)-3',8-cyclo-7,8-dihydroguanosine 5'-triphosphate. The polypeptide is GTP 3',8-cyclase (Lactiplantibacillus plantarum (strain ATCC BAA-793 / NCIMB 8826 / WCFS1) (Lactobacillus plantarum)).